A 335-amino-acid chain; its full sequence is Aliphatic sulfonates import ATP-binding protein SsuB (335 aa).

Residues 74–293 (VRLTRVSKRY…ARASAAFAAL (220 aa)) form the ABC transporter domain. 106 to 113 (GRSGCGKS) is an ATP binding site. The tract at residues 308 to 335 (APAAPNAAGPEGASRGRAAPASGLRWAV) is disordered.

Belongs to the ABC transporter superfamily. Aliphatic sulfonates importer (TC 3.A.1.17.2) family. In terms of assembly, the complex is composed of two ATP-binding proteins (SsuB), two transmembrane proteins (SsuC) and a solute-binding protein (SsuA).

The protein localises to the cell inner membrane. It carries out the reaction ATP + H2O + aliphatic sulfonate-[sulfonate-binding protein]Side 1 = ADP + phosphate + aliphatic sulfonateSide 2 + [sulfonate-binding protein]Side 1.. Functionally, part of the ABC transporter complex SsuABC involved in aliphatic sulfonates import. Responsible for energy coupling to the transport system. The sequence is that of Aliphatic sulfonates import ATP-binding protein SsuB from Burkholderia mallei (strain ATCC 23344).